We begin with the raw amino-acid sequence, 781 residues long: Toll-like receptor 2 type-2 (781 aa).

Residues 1-24 form the signal peptide; that stretch reads MHTWKMWAICTALAAHLPEEQALR. At 25–585 the chain is on the extracellular side; that stretch reads QACLSCDATQ…QLSLMECHRS (561 aa). A disulfide bridge links Cys30 with Cys36. A glycan (N-linked (GlcNAc...) asparagine) is linked at Asn37. LRR repeat units lie at residues 53–74, 77–98, 101–122, 125–146, 150–171, and 174–195; these read KITVLNLAHNRIKVIRTHDLQK, NLRTLLLQSNQISSIDEDSFGS, KLELLDLSNNSLAHLSPVWFGP, SLQHLRIQGNSYSDLGESSPFS, NLSSLHLGNPQFSIIRQGNFEG, and FLNTLRIDGDNLSQYEPGSLKS. Asn109 carries N-linked (GlcNAc...) asparagine glycosylation. Residues Asn150, Asn184, Asn301, and Asn313 are each glycosylated (N-linked (GlcNAc...) asparagine). Cys350 and Cys379 form a disulfide bridge. LRR repeat units lie at residues 358-378, 385-406, 411-432, 434-455, 456-474, 475-496, and 497-518; these read SLEYLDLSANLLGDQSLEHSA, SLQTLNLSQNSLSDLKMTGKSL, NLNLLDISENNFGEIPDMCEWP, NLKYLNLSSTQIPKLTTCIPST, LEVLDVSANNLQDFGLQLP, FLKELYLTKNHLKTLPEATDIP, and NLVAMSISRNKLNSFSKEEFES. A glycan (N-linked (GlcNAc...) asparagine) is linked at Asn390. Cys429 and Cys451 form a disulfide bridge. Asn439 is a glycosylation site (N-linked (GlcNAc...) asparagine). Positions 530–584 constitute an LRRCT domain; it reads NNFICSCEFLSFIHHEAGIAQVLVGWPESYICDSPLTVRGAQVGSVQLSLMECHR. Residues 586 to 606 form a helical membrane-spanning segment; the sequence is LLVSLICTLVFLFILILVVVG. The Cytoplasmic segment spans residues 607 to 781; the sequence is YKYHAVWYMR…WENLKAALKS (175 aa). In terms of domain architecture, TIR spans 636–779; the sequence is ICYDAFVSYS…MFWENLKAAL (144 aa).

It belongs to the Toll-like receptor family. In terms of assembly, binds MYD88 (via TIR domain). In terms of processing, N-glycosylated. Highly expressed in ovary. Also detected in brain, heart, lung, liver, spleen and kidney, and at low levels in gizzard, muscle, testis and proventriculus.

Its subcellular location is the membrane. Its function is as follows. Participates in the innate immune response to microbial agents. Acts via MYD88 and TRAF6, leading to NF-kappa-B activation, cytokine secretion and the inflammatory response. Mediates the response to mycoplasmal macrophage-activating lipopeptide-2kD (MALP-2). The chain is Toll-like receptor 2 type-2 (TLR2-2) from Gallus gallus (Chicken).